Reading from the N-terminus, the 355-residue chain is Isocitrate dehydrogenase [NAD] subunit gamma, mitochondrial (355 aa).

Residue Ile-1 is a transit peptide, mitochondrion. Citrate-binding residues include Thr-82 and Asn-95. Residues Arg-98, Arg-129, and Asp-216 each contribute to the substrate site. Mn(2+) is bound at residue Asp-216. Asn-274, Thr-275, and Asn-286 together coordinate ADP.

This sequence belongs to the isocitrate and isopropylmalate dehydrogenases family. Heterooligomer of subunits alpha (IDH3A), beta (IDH3B), and gamma (IDH3G) in the apparent ratio of 2:1:1. The heterodimer containing one IDH3A and one IDH3B subunit and the heterodimer containing one IDH3A and one IDH3G subunit assemble into a heterotetramer (which contains two subunits of IDH3A, one of IDH3B and one of IDH3G) and further into the heterooctamer. It depends on Mg(2+) as a cofactor. The cofactor is Mn(2+).

Its subcellular location is the mitochondrion. Its activity is regulated as follows. The heterotetramer and the heterodimer composed of IDH3A and IDH3G subunits can be allosterically activated by citrate (CIT) or/and ADP, and the two activators can act independently or synergistically. The heterodimer composed of IDH3A and IDH3B subunits cannot be allosterically regulated and the allosteric regulation of the heterotetramer is through the IDH3G subunit and not the IDH3B subunit. The IDH3G subunit contains the allosteric site which consists of a CIT-binding site and an ADP-binding site, and the binding of CIT and ADP causes conformational changes at the allosteric site which are transmitted to the active site in the catalytic subunit (IDH3A) through a cascade of conformational changes at the heterodimer interface, leading to stabilization of the isocitrate-binding at the active site and thus activation of the enzyme. ATP can activate the heterotetramer and the heterodimer composed of IDH3A and IDH3G subunits at low concentrations but inhibits their activities at high concentrations, whereas ATP exhibits only inhibitory effect on the heterodimer composed of IDH3A and IDH3B subunits. Its function is as follows. Regulatory subunit which plays a role in the allosteric regulation of the enzyme catalyzing the decarboxylation of isocitrate (ICT) into alpha-ketoglutarate. The heterodimer composed of the alpha (IDH3A) and beta (IDH3B) subunits and the heterodimer composed of the alpha (IDH3A) and gamma (IDH3G) subunits, have considerable basal activity but the full activity of the heterotetramer (containing two subunits of IDH3A, one of IDH3B and one of IDH3G) requires the assembly and cooperative function of both heterodimers. The protein is Isocitrate dehydrogenase [NAD] subunit gamma, mitochondrial (IDH3G) of Macaca fascicularis (Crab-eating macaque).